Consider the following 362-residue polypeptide: 3-dehydroquinate synthase (362 aa).

NAD(+) is bound by residues 71 to 76 (DGEQYK), 105 to 109 (GVVGD), 129 to 130 (TT), Lys142, Lys151, and 169 to 172 (CLKT). Residues Glu184, His248, and His265 each coordinate Zn(2+).

This sequence belongs to the sugar phosphate cyclases superfamily. Dehydroquinate synthase family. Requires Co(2+) as cofactor. The cofactor is Zn(2+). NAD(+) serves as cofactor.

It is found in the cytoplasm. It catalyses the reaction 7-phospho-2-dehydro-3-deoxy-D-arabino-heptonate = 3-dehydroquinate + phosphate. Its pathway is metabolic intermediate biosynthesis; chorismate biosynthesis; chorismate from D-erythrose 4-phosphate and phosphoenolpyruvate: step 2/7. Catalyzes the conversion of 3-deoxy-D-arabino-heptulosonate 7-phosphate (DAHP) to dehydroquinate (DHQ). The protein is 3-dehydroquinate synthase of Yersinia pseudotuberculosis serotype O:1b (strain IP 31758).